We begin with the raw amino-acid sequence, 336 residues long: N-lysine methyltransferase KMT5A-B (336 aa).

2 disordered regions span residues 1 to 107 (MGRG…SSKQ) and 141 to 165 (QSQK…NRKL). A compositionally biased stretch (basic and acidic residues) spans 67-93 (SVAHHESKNLGKPTTETRKKAEVEKKR). Positions 95–104 (SSATELSVKS) are enriched in polar residues. Over residues 146–162 (VKNKSQRRKAQRKKSPN) the composition is skewed to basic residues. Residues 200–321 (DGMKMDMIIG…VGEELLYDYG (122 aa)) form the SET domain. S-adenosyl-L-methionine is bound by residues 210 to 212 (KGR), tyrosine 255, and 282 to 283 (NH).

Belongs to the class V-like SAM-binding methyltransferase superfamily. Histone-lysine methyltransferase family. PR/SET subfamily. Post-translationally, phosphorylated during mitosis.

The protein localises to the nucleus. Its subcellular location is the chromosome. The enzyme catalyses L-lysyl(20)-[histone H4] + S-adenosyl-L-methionine = N(6)-methyl-L-lysyl(20)-[histone H4] + S-adenosyl-L-homocysteine + H(+). The catalysed reaction is L-lysyl-[protein] + S-adenosyl-L-methionine = N(6)-methyl-L-lysyl-[protein] + S-adenosyl-L-homocysteine + H(+). Functionally, protein-lysine N-methyltransferase that monomethylates both histones and non-histone proteins. Specifically monomethylates 'Lys-20' of histone H4 (H4K20me1). H4K20me1 is enriched during mitosis and represents a specific tag for epigenetic transcriptional repression. Mainly functions in euchromatin regions, thereby playing a central role in the silencing of euchromatic genes. Required for cell proliferation, probably by contributing to the maintenance of proper higher-order structure of DNA during mitosis. Involved in chromosome condensation and proper cytokinesis. The protein is N-lysine methyltransferase KMT5A-B of Xenopus laevis (African clawed frog).